The sequence spans 560 residues: Choline/ethanolamine transporter FLVCR1 (560 aa).

A disordered region spans residues 1-43 (MARPDDEVGPAVAPGHPLGKGYLPVPKGAPDGEARLVPQNGPE). Residues 1–92 (MARPDDEVGP…EDVPCPACPP (92 aa)) are Cytoplasmic-facing. The helical transmembrane segment at 93–117 (RTALSPRRFVVLLIFSLYSLVNAFQ) threads the bilayer. The Extracellular segment spans residues 118-135 (WIQYSSISNVFEDFYEVS). Residues 136 to 163 (PLHINWLSMVYMVAYVPLIFPATWLLDT) form a helical membrane-spanning segment. The Cytoplasmic segment spans residues 164 to 165 (RG). A helical transmembrane segment spans residues 166–185 (LRLTALLGSGLNCLGAWVKC). The Extracellular segment spans residues 186 to 192 (GSVQRHL). A helical membrane pass occupies residues 193–221 (FWVTMLGQILCSVAQVFILGLPSPVASVW). Gln207 serves as a coordination point for ethanolamine. Over 222–226 (FGPKE) the chain is Cytoplasmic. The helical transmembrane segment at 227–252 (VSTACATAVLGNQLGTAVGFLLPPVL) threads the bilayer. At 253–270 (VPALGTQNNTGLLAHTQN) the chain is on the extracellular side. Asn270 is a glycosylation site (N-linked (GlcNAc...) asparagine). The helical transmembrane segment at 271–300 (NTDLLAHNINTMFYGTAFISTFLFFLTVIA) threads the bilayer. Topologically, residues 301 to 336 (FKEKPPLPPSQAQAILRDSPPEEYSYKSSIWNLCRN) are cytoplasmic. The chain crosses the membrane as a helical span at residues 337 to 367 (IPFVLLLVSYGIMTGAFYSISTLLNQIILTY). The Extracellular segment spans residues 368–371 (YVGE). The helical transmembrane segment at 372 to 400 (EVNAGRIGLTLVVAGMVGSILCGLWLDYT) threads the bilayer. The Cytoplasmic segment spans residues 401–402 (KT). The helical transmembrane segment at 403-425 (YKQTTLIVYVLSFIGMLIFTFTL) threads the bilayer. Topologically, residues 426–428 (NLG) are extracellular. Residues 429–458 (YIVALFFTGGILGFFMTGYLPLGFEFAVEI) traverse the membrane as a helical segment. Topologically, residues 459–466 (TYPESEGM) are cytoplasmic. Residues 467-492 (SSGLLNTAAQILGIFFTLAQGKITTD) form a helical membrane-spanning segment. Gln476 contacts ethanolamine. A choline-binding site is contributed by Gln476. The Extracellular segment spans residues 493–495 (YNS). A helical membrane pass occupies residues 496–518 (PEAGNIFLCAWMFVGIILTALIK). Over 519–560 (SDLRRHNINTGLTNIDVKAVPVDSRVDPKPKAMVSIQSESSL) the chain is Cytoplasmic. Position 542 is a phosphoserine (Ser542).

It belongs to the major facilitator superfamily. Feline leukemia virus subgroup C receptor (TC 2.A.1.28.1) family.

Its subcellular location is the cell membrane. It carries out the reaction choline(out) = choline(in). The catalysed reaction is ethanolamine(in) = ethanolamine(out). It catalyses the reaction heme b(in) = heme b(out). Uniporter that mediates the transport of extracellular choline and ethanolamine into cells, thereby playing a key role in phospholipid biosynthesis. Choline and ethanolamine are the precursors of phosphatidylcholine and phosphatidylethanolamine, respectively, the two most abundant phospholipids. Transport is not coupled with proton transport and is exclusively driven by the choline (or ethanolamine) gradient across the plasma membrane. Also acts as a heme b transporter that mediates heme efflux from the cytoplasm to the extracellular compartment. The polypeptide is Choline/ethanolamine transporter FLVCR1 (Flvcr1) (Mus terricolor (Earth-colored mouse)).